Here is a 356-residue protein sequence, read N- to C-terminus: D-alanine--D-alanine ligase (356 aa).

The ATP-grasp domain maps to 134 to 339; the sequence is KQLFAHRGLP…YADLITKLIE (206 aa). 167 to 222 is an ATP binding site; sequence KDKLEFPVFVKPANLGSSVGISKCNNEEELKSGIEEAFQFDRKLVIEQGIEAREIE. Asp293, Glu306, and Asn308 together coordinate Mg(2+).

It belongs to the D-alanine--D-alanine ligase family. It depends on Mg(2+) as a cofactor. Requires Mn(2+) as cofactor.

Its subcellular location is the cytoplasm. It carries out the reaction 2 D-alanine + ATP = D-alanyl-D-alanine + ADP + phosphate + H(+). Its pathway is cell wall biogenesis; peptidoglycan biosynthesis. In terms of biological role, cell wall formation. This Staphylococcus carnosus (strain TM300) protein is D-alanine--D-alanine ligase.